A 343-amino-acid chain; its full sequence is Heat-inducible transcription repressor HrcA (343 aa).

This sequence belongs to the HrcA family.

Negative regulator of class I heat shock genes (grpE-dnaK-dnaJ and groELS operons). Prevents heat-shock induction of these operons. The protein is Heat-inducible transcription repressor HrcA of Halalkalibacterium halodurans (strain ATCC BAA-125 / DSM 18197 / FERM 7344 / JCM 9153 / C-125) (Bacillus halodurans).